The chain runs to 1180 residues: Lon protease homolog 2, peroxisomal (1180 aa).

Residues 19 to 366 (LPTCKLDSNL…ELINMINQLI (348 aa)) enclose the Lon N-terminal domain. A disordered region spans residues 416–465 (PISNRGNIKSFNNSENGNNNKTNGSGITSRRPKSNEDGGEVYDEEDDDEE). Over residues 422–444 (NIKSFNNSENGNNNKTNGSGITS) the composition is skewed to low complexity. The segment covering 452–465 (DGGEVYDEEDDDEE) has biased composition (acidic residues). 667–674 (GPPGTGKT) provides a ligand contact to ATP. The Lon proteolytic domain occupies 924-1163 (NSRVGIVNGL…YDVMKILWGE (240 aa)). Catalysis depends on residues serine 1032 and lysine 1075.

It belongs to the peptidase S16 family.

Its subcellular location is the peroxisome matrix. The enzyme catalyses Hydrolysis of proteins in presence of ATP.. Its function is as follows. ATP-dependent serine protease that mediates the selective degradation of misfolded and unassembled polypeptides in the peroxisomal matrix. Necessary for type 2 peroxisome targeting signal (PTS2)-containing protein processing and facilitates peroxisome matrix protein import. The sequence is that of Lon protease homolog 2, peroxisomal from Scheffersomyces stipitis (strain ATCC 58785 / CBS 6054 / NBRC 10063 / NRRL Y-11545) (Yeast).